A 240-amino-acid chain; its full sequence is MSDIKYKRVLLKLSGEALAGDQGKGINPPEILKVAEEIKEVHDLGVQIAIVVGGGNMWRGEAGAEIGMERAQADYIGMLGTVMNALALQDSLESVGVPTRVQTAIEMRQVAEPYIRRKAIRHLEKGRIVIFAAGTGSPYFSTDTTAALRASELNAEVILMAKNGVDGIYNADPKVDPTAKKYTKLTHMDIINKGLRVMDTTASSLSMDNNIALVVFNMNNRGNIKKVVEGEEIGTTVEGK.

Residue 12-15 (KLSG) participates in ATP binding. Positions 20–25 (GDQGKG) are involved in allosteric activation by GTP. Glycine 54 contacts UMP. 2 residues coordinate ATP: glycine 55 and arginine 59. UMP is bound by residues aspartate 74 and 135 to 142 (TGSPYFST). ATP is bound by residues asparagine 163, tyrosine 169, and aspartate 172.

This sequence belongs to the UMP kinase family. Homohexamer.

Its subcellular location is the cytoplasm. The enzyme catalyses UMP + ATP = UDP + ADP. The protein operates within pyrimidine metabolism; CTP biosynthesis via de novo pathway; UDP from UMP (UMPK route): step 1/1. Allosterically activated by GTP. Inhibited by UTP. In terms of biological role, catalyzes the reversible phosphorylation of UMP to UDP. The protein is Uridylate kinase of Ligilactobacillus salivarius (strain UCC118) (Lactobacillus salivarius).